Reading from the N-terminus, the 335-residue chain is Acetyl-coenzyme A carboxylase carboxyl transferase subunit alpha (335 aa).

One can recognise a CoA carboxyltransferase C-terminal domain in the interval 40 to 294 (QLETLAARRR…KEAIEKHLNA (255 aa)).

It belongs to the AccA family. In terms of assembly, acetyl-CoA carboxylase is a heterohexamer composed of biotin carboxyl carrier protein (AccB), biotin carboxylase (AccC) and two subunits each of ACCase subunit alpha (AccA) and ACCase subunit beta (AccD).

The protein resides in the cytoplasm. The enzyme catalyses N(6)-carboxybiotinyl-L-lysyl-[protein] + acetyl-CoA = N(6)-biotinyl-L-lysyl-[protein] + malonyl-CoA. It participates in lipid metabolism; malonyl-CoA biosynthesis; malonyl-CoA from acetyl-CoA: step 1/1. Its function is as follows. Component of the acetyl coenzyme A carboxylase (ACC) complex. First, biotin carboxylase catalyzes the carboxylation of biotin on its carrier protein (BCCP) and then the CO(2) group is transferred by the carboxyltransferase to acetyl-CoA to form malonyl-CoA. In Prochlorococcus marinus (strain MIT 9301), this protein is Acetyl-coenzyme A carboxylase carboxyl transferase subunit alpha.